Consider the following 169-residue polypeptide: Cilia- and flagella-associated protein HOATZ (169 aa).

Disordered stretches follow at residues 1–21 (METG…MCPP), 52–89 (SQLV…LASN), and 144–169 (KAKE…KTLD). The segment covering 75 to 89 (SENSHSSQSFHLASN) has biased composition (polar residues).

The protein belongs to the HOATZ family.

It is found in the cytoplasm. The protein resides in the cell projection. The protein localises to the cilium. Required for motile ciliogenesis and flagellar genesis by mediating the maturation of the glycolytic enzyme ENO4. In Homo sapiens (Human), this protein is Cilia- and flagella-associated protein HOATZ.